Consider the following 310-residue polypeptide: Elongation factor Ts, mitochondrial (310 aa).

The N-terminal 42 residues, 1–42, are a transit peptide targeting the mitochondrion; that stretch reads MGFQVLRSVIQAPLAKRSFLCKSCPSGLRVLYNNILLSSRSY.

This sequence belongs to the EF-Ts family.

The protein localises to the mitochondrion. In terms of biological role, associates with the EF-Tu.GDP complex and induces the exchange of GDP to GTP. It remains bound to the aminoacyl-tRNA.EF-Tu.GTP complex up to the GTP hydrolysis stage on the ribosome. The sequence is that of Elongation factor Ts, mitochondrial (tsf1) from Schizosaccharomyces japonicus (strain yFS275 / FY16936) (Fission yeast).